Consider the following 431-residue polypeptide: Enolase (431 aa).

Glutamine 167 contributes to the (2R)-2-phosphoglycerate binding site. Glutamate 209 (proton donor) is an active-site residue. Mg(2+)-binding residues include aspartate 246, glutamate 289, and aspartate 316. Residues lysine 341, arginine 370, serine 371, and lysine 392 each contribute to the (2R)-2-phosphoglycerate site. The active-site Proton acceptor is the lysine 341.

Belongs to the enolase family. In terms of assembly, component of the RNA degradosome, a multiprotein complex involved in RNA processing and mRNA degradation. The cofactor is Mg(2+).

The protein localises to the cytoplasm. The protein resides in the secreted. It is found in the cell surface. It carries out the reaction (2R)-2-phosphoglycerate = phosphoenolpyruvate + H2O. It functions in the pathway carbohydrate degradation; glycolysis; pyruvate from D-glyceraldehyde 3-phosphate: step 4/5. Its function is as follows. Catalyzes the reversible conversion of 2-phosphoglycerate (2-PG) into phosphoenolpyruvate (PEP). It is essential for the degradation of carbohydrates via glycolysis. In Marinobacter nauticus (strain ATCC 700491 / DSM 11845 / VT8) (Marinobacter aquaeolei), this protein is Enolase.